The chain runs to 328 residues: Small neutral protease regulatory protein (328 aa).

The 60-residue stretch at M1 to T60 folds into the HTH lysR-type domain. The segment at residues L20 to T39 is a DNA-binding region (H-T-H motif).

This sequence belongs to the LysR transcriptional regulatory family.

Its function is as follows. Transcriptional trans-activator of the gene (mprA) for the small neutral protease. This is Small neutral protease regulatory protein (mprR) from Streptomyces coelicolor (strain ATCC BAA-471 / A3(2) / M145).